The following is a 76-amino-acid chain: Conotoxin VnMKLT2-013 (76 aa).

The N-terminal stretch at 1 to 23 is a signal peptide; the sequence is MMKLTCVLIIAVLFLTACQLTTA. Positions 24 to 42 are excised as a propeptide; the sequence is ETRDEYRAVRSSDEVQNSR. The disordered stretch occupies residues 29-49; the sequence is YRAVRSSDEVQNSRSTDDCST. 3 cysteine pairs are disulfide-bonded: Cys-47-Cys-58, Cys-52-Cys-63, and Cys-57-Cys-72.

Belongs to the conotoxin O1 superfamily. In terms of tissue distribution, expressed by the venom duct.

Its subcellular location is the secreted. This is Conotoxin VnMKLT2-013 from Conus ventricosus (Mediterranean cone).